A 358-amino-acid polypeptide reads, in one-letter code: Isopentenyl-diphosphate delta-isomerase (358 aa).

12 to 13 (RK) provides a ligand contact to substrate. Residues 69-71 (AMT), S99, and N128 each bind FMN. Substrate is bound at residue Q158. Residue E159 participates in Mg(2+) binding. Residues K190, T220, 267 to 269 (GIR), and 288 to 289 (AG) contribute to the FMN site.

This sequence belongs to the IPP isomerase type 2 family. In terms of assembly, homooctamer. Dimer of tetramers. It depends on FMN as a cofactor. NADPH is required as a cofactor. Mg(2+) serves as cofactor.

It is found in the cytoplasm. It catalyses the reaction isopentenyl diphosphate = dimethylallyl diphosphate. Involved in the biosynthesis of isoprenoids. Catalyzes the 1,3-allylic rearrangement of the homoallylic substrate isopentenyl (IPP) to its allylic isomer, dimethylallyl diphosphate (DMAPP). The polypeptide is Isopentenyl-diphosphate delta-isomerase (Listeria monocytogenes serotype 4b (strain CLIP80459)).